We begin with the raw amino-acid sequence, 396 residues long: Argininosuccinate synthase (396 aa).

9 to 17 (AYSGGLDTS) lines the ATP pocket. Tyr-85 is an L-citrulline binding site. Gly-115 contacts ATP. 3 residues coordinate L-aspartate: Thr-117, Asn-121, and Asp-122. Asn-121 contributes to the L-citrulline binding site. L-citrulline is bound by residues Arg-125, Ser-173, Glu-258, and Tyr-270.

The protein belongs to the argininosuccinate synthase family. Type 1 subfamily. As to quaternary structure, homotetramer.

It localises to the cytoplasm. It carries out the reaction L-citrulline + L-aspartate + ATP = 2-(N(omega)-L-arginino)succinate + AMP + diphosphate + H(+). It functions in the pathway amino-acid biosynthesis; L-arginine biosynthesis; L-arginine from L-ornithine and carbamoyl phosphate: step 2/3. This is Argininosuccinate synthase from Streptococcus agalactiae serotype III (strain NEM316).